We begin with the raw amino-acid sequence, 424 residues long: Protein CLP1 homolog 5 (424 aa).

ATP is bound by residues Glu-16, Thr-56, and 124–129 (DSGKST).

It belongs to the Clp1 family. Clp1 subfamily. As to quaternary structure, forms a complex with cleavage and polyadenylation specificity factor (CPSF) subunits PCFS1, FIPS3 and CPSF30.

The protein resides in the nucleus. Its function is as follows. Required for endonucleolytic cleavage during polyadenylation-dependent pre-mRNA 3'-end formation. The sequence is that of Protein CLP1 homolog 5 from Arabidopsis thaliana (Mouse-ear cress).